The primary structure comprises 307 residues: Methionyl-tRNA formyltransferase (307 aa).

109–112 (SLLP) lines the (6S)-5,6,7,8-tetrahydrofolate pocket.

This sequence belongs to the Fmt family.

The catalysed reaction is L-methionyl-tRNA(fMet) + (6R)-10-formyltetrahydrofolate = N-formyl-L-methionyl-tRNA(fMet) + (6S)-5,6,7,8-tetrahydrofolate + H(+). Attaches a formyl group to the free amino group of methionyl-tRNA(fMet). The formyl group appears to play a dual role in the initiator identity of N-formylmethionyl-tRNA by promoting its recognition by IF2 and preventing the misappropriation of this tRNA by the elongation apparatus. This is Methionyl-tRNA formyltransferase from Dechloromonas aromatica (strain RCB).